Reading from the N-terminus, the 226-residue chain is PKHD-type hydroxylase PputW619_4316 (226 aa).

The Fe2OG dioxygenase domain maps to 78–178; it reads KVFPPLINCY…RYAAFFWTQS (101 aa). Residues His-96, Asp-98, and His-159 each coordinate Fe cation. Arg-169 contacts 2-oxoglutarate.

The cofactor is Fe(2+). Requires L-ascorbate as cofactor.

In Pseudomonas putida (strain W619), this protein is PKHD-type hydroxylase PputW619_4316.